The primary structure comprises 566 residues: Oxygen-dependent choline dehydrogenase (566 aa).

7 to 36 (DYIICGAGSAGNVLATRLTEDPNVTVLLLE) serves as a coordination point for FAD. A disordered region spans residues 183–203 (QQEGFGPMDRTVTPKGRRAST). Residue His-474 is the Proton acceptor of the active site.

The protein belongs to the GMC oxidoreductase family. FAD serves as cofactor.

The enzyme catalyses choline + A = betaine aldehyde + AH2. It catalyses the reaction betaine aldehyde + NAD(+) + H2O = glycine betaine + NADH + 2 H(+). Its pathway is amine and polyamine biosynthesis; betaine biosynthesis via choline pathway; betaine aldehyde from choline (cytochrome c reductase route): step 1/1. Involved in the biosynthesis of the osmoprotectant glycine betaine. Catalyzes the oxidation of choline to betaine aldehyde and betaine aldehyde to glycine betaine at the same rate. This Burkholderia ambifaria (strain ATCC BAA-244 / DSM 16087 / CCUG 44356 / LMG 19182 / AMMD) (Burkholderia cepacia (strain AMMD)) protein is Oxygen-dependent choline dehydrogenase.